Here is a 382-residue protein sequence, read N- to C-terminus: Succinate--CoA ligase [ADP-forming] subunit beta (382 aa).

ATP is bound by residues K46, 53 to 55, V95, and E100; that span reads GRG. Mg(2+)-binding residues include N192 and D206. Residues N257 and 314–316 each bind substrate; that span reads GIT.

The protein belongs to the succinate/malate CoA ligase beta subunit family. Heterotetramer of two alpha and two beta subunits. It depends on Mg(2+) as a cofactor.

The enzyme catalyses succinate + ATP + CoA = succinyl-CoA + ADP + phosphate. The catalysed reaction is GTP + succinate + CoA = succinyl-CoA + GDP + phosphate. The protein operates within carbohydrate metabolism; tricarboxylic acid cycle; succinate from succinyl-CoA (ligase route): step 1/1. Functionally, succinyl-CoA synthetase functions in the citric acid cycle (TCA), coupling the hydrolysis of succinyl-CoA to the synthesis of either ATP or GTP and thus represents the only step of substrate-level phosphorylation in the TCA. The beta subunit provides nucleotide specificity of the enzyme and binds the substrate succinate, while the binding sites for coenzyme A and phosphate are found in the alpha subunit. The protein is Succinate--CoA ligase [ADP-forming] subunit beta of Bacteroides fragilis (strain ATCC 25285 / DSM 2151 / CCUG 4856 / JCM 11019 / LMG 10263 / NCTC 9343 / Onslow / VPI 2553 / EN-2).